The primary structure comprises 238 residues: Large ribosomal subunit protein uL2 (238 aa).

The tract at residues 198 to 238 is disordered; it reads NHPHGGGSHQSPSFPTTVSRNAPPGRKVGHIAARSTGRRKR. Over residues 206-217 the composition is skewed to polar residues; sequence HQSPSFPTTVSR.

It belongs to the universal ribosomal protein uL2 family. Part of the 50S ribosomal subunit. Forms a bridge to the 30S subunit in the 70S ribosome.

In terms of biological role, one of the primary rRNA binding proteins. Required for association of the 30S and 50S subunits to form the 70S ribosome, for tRNA binding and peptide bond formation. It has been suggested to have peptidyltransferase activity; this is somewhat controversial. Makes several contacts with the 16S rRNA in the 70S ribosome. This Hyperthermus butylicus (strain DSM 5456 / JCM 9403 / PLM1-5) protein is Large ribosomal subunit protein uL2.